We begin with the raw amino-acid sequence, 162 residues long: NADH-quinone oxidoreductase subunit I (162 aa).

2 consecutive 4Fe-4S ferredoxin-type domains span residues L53–E83 and T93–V122. Residues C63, C66, C69, C73, C102, C105, C108, and C112 each contribute to the [4Fe-4S] cluster site.

It belongs to the complex I 23 kDa subunit family. As to quaternary structure, NDH-1 is composed of 14 different subunits. Subunits NuoA, H, J, K, L, M, N constitute the membrane sector of the complex. [4Fe-4S] cluster is required as a cofactor.

It localises to the cell inner membrane. The enzyme catalyses a quinone + NADH + 5 H(+)(in) = a quinol + NAD(+) + 4 H(+)(out). Functionally, NDH-1 shuttles electrons from NADH, via FMN and iron-sulfur (Fe-S) centers, to quinones in the respiratory chain. The immediate electron acceptor for the enzyme in this species is believed to be ubiquinone. Couples the redox reaction to proton translocation (for every two electrons transferred, four hydrogen ions are translocated across the cytoplasmic membrane), and thus conserves the redox energy in a proton gradient. The sequence is that of NADH-quinone oxidoreductase subunit I from Nitrosomonas eutropha (strain DSM 101675 / C91 / Nm57).